The chain runs to 622 residues: Chaperone protein HscA homolog (622 aa).

The protein belongs to the heat shock protein 70 family.

Its function is as follows. Chaperone involved in the maturation of iron-sulfur cluster-containing proteins. Has a low intrinsic ATPase activity which is markedly stimulated by HscB. The chain is Chaperone protein HscA homolog from Acidovorax sp. (strain JS42).